The primary structure comprises 669 residues: GTP-binding protein 1 (669 aa).

Residues 1-32 form a disordered region; it reads MAAERSRSPVDSPVPASMFAPEPSSPGAARAA. Phosphoserine is present on residues Ser6, Ser8, Ser12, Ser24, Ser25, Ser44, Ser47, and Ser69. The region spanning 158–389 is the tr-type G domain; sequence FLEVRVAVVG…LNLLSPRTSY (232 aa). A G1 region spans residues 167 to 174; it reads GNVDAGKS. 167-174 serves as a coordination point for GTP; the sequence is GNVDAGKS. A G2 region spans residues 206 to 210; it reads GRTSS. The interval 252–255 is G3; sequence DLAG. Residues 252–256 and 308–311 contribute to the GTP site; these read DLAGH and TKID. Positions 308-311 are G4; it reads TKID. Residues 366–368 form a G5 region; the sequence is SNV. 2 stretches are compositionally biased toward polar residues: residues 573–595 and 620–637; these read LLQT…QSTK and DEAS…SGLQ. A disordered region spans residues 573 to 669; that stretch reads LLQTTNNSPM…GACVTPASGC (97 aa). Ser580 carries the phosphoserine modification. Basic residues predominate over residues 646–657; it reads GRRRGGQRHKVK.

This sequence belongs to the TRAFAC class translation factor GTPase superfamily. Classic translation factor GTPase family. GTPBP1 subfamily. In terms of assembly, interacts with EXOSC2/RRP4, EXOSC3/RRP40, EXOSC5/RRP46, HNRNPD, HNRNPR and SYNCRIP. Identified in a complex with HNRNPD, HNRNPL, HNRNPQ, HNRNPR, HNRNPU and AANAT mRNA, but does not bind mRNA by itself. In terms of tissue distribution, detected in pineal gland (at protein level).

It localises to the cytoplasm. In terms of biological role, promotes degradation of target mRNA species. Plays a role in the regulation of circadian mRNA stability. Binds GTP and has GTPase activity. The chain is GTP-binding protein 1 (Gtpbp1) from Rattus norvegicus (Rat).